The chain runs to 240 residues: MTFQFQNEWNPILSDISDSIVDRTAAQWTPATYWGLLEADARAIRPVQQYVCNGPCCSTLWAGPVPGYVITQFVPPVTYPNPYRVVAAPGCAPGSEWCEPPTVSAPPPPSQFSDEPTSPELAPAVPKIDIHEAPVATVSSPTSPRPITTESSRVSPTKEKWGRKRVHKKTHAEATWIPQILKRGMSLSSLLPAAARGQRSAVRRRVTFTNSKDVLYYDKYSAPVMIQGNTVYVEKTFSDK.

Disordered regions lie at residues 99 to 121 (EPPT…SPEL) and 136 to 167 (ATVS…KRVH). Residues 137–155 (TVSSPTSPRPITTESSRVS) are compositionally biased toward polar residues.

This is an uncharacterized protein from Ictaluridae (bullhead catfishes).